A 96-amino-acid polypeptide reads, in one-letter code: Large ribosomal subunit protein bL21 (96 aa).

The protein belongs to the bacterial ribosomal protein bL21 family. As to quaternary structure, part of the 50S ribosomal subunit. Contacts protein L20.

In terms of biological role, this protein binds to 23S rRNA in the presence of protein L20. The polypeptide is Large ribosomal subunit protein bL21 (Chlorobium phaeobacteroides (strain BS1)).